The primary structure comprises 112 residues: Phosphoribosyl-ATP pyrophosphatase (112 aa).

Belongs to the PRA-PH family.

It is found in the cytoplasm. The enzyme catalyses 1-(5-phospho-beta-D-ribosyl)-ATP + H2O = 1-(5-phospho-beta-D-ribosyl)-5'-AMP + diphosphate + H(+). It functions in the pathway amino-acid biosynthesis; L-histidine biosynthesis; L-histidine from 5-phospho-alpha-D-ribose 1-diphosphate: step 2/9. This is Phosphoribosyl-ATP pyrophosphatase from Chromohalobacter salexigens (strain ATCC BAA-138 / DSM 3043 / CIP 106854 / NCIMB 13768 / 1H11).